We begin with the raw amino-acid sequence, 223 residues long: Large ribosomal subunit protein uL4c (223 aa).

The tract at residues 61-96 (TKTRSEVEGGGKKPWKQKGTGNARAGSSNSPLWKGG) is disordered.

This sequence belongs to the universal ribosomal protein uL4 family. Part of the 50S ribosomal subunit.

The protein localises to the plastid. It is found in the chloroplast. Its function is as follows. Probably binds the 23S rRNA. The polypeptide is Large ribosomal subunit protein uL4c (rpl4) (Guillardia theta (Cryptophyte)).